The primary structure comprises 189 residues: Peptidyl-tRNA hydrolase (189 aa).

TRNA is bound at residue Tyr-14. His-19 functions as the Proton acceptor in the catalytic mechanism. Residues Tyr-64, Asn-66, and Asn-112 each coordinate tRNA.

Belongs to the PTH family. Monomer.

It localises to the cytoplasm. It carries out the reaction an N-acyl-L-alpha-aminoacyl-tRNA + H2O = an N-acyl-L-amino acid + a tRNA + H(+). Its function is as follows. Hydrolyzes ribosome-free peptidyl-tRNAs (with 1 or more amino acids incorporated), which drop off the ribosome during protein synthesis, or as a result of ribosome stalling. Catalyzes the release of premature peptidyl moieties from peptidyl-tRNA molecules trapped in stalled 50S ribosomal subunits, and thus maintains levels of free tRNAs and 50S ribosomes. This chain is Peptidyl-tRNA hydrolase, found in Clostridium botulinum (strain Loch Maree / Type A3).